Consider the following 557-residue polypeptide: Jerky protein (557 aa).

An HTH psq-type domain is found at 11-62 (KGEKRKRVVLTLKEKIDICTRLERGESRKALMQEYNVGMSTLYDIKAHKAQL). 2 consecutive DNA-binding regions (H-T-H motif) follow at residues 38–58 (RKAL…IKAH) and 110–142 (PMLI…FKAR). In terms of domain architecture, HTH CENPB-type spans 77–149 (QRRTLHTPKL…KARHGIKKLD (73 aa)). The DDE-1 domain maps to 213–382 (KDRLTVLMCA…VPSQVFQRAW (170 aa)).

This sequence belongs to the tigger transposable element derived protein family. As to expression, brain; highest in the temporal and brainstem regions.

It localises to the nucleus. Functionally, may bind DNA. The polypeptide is Jerky protein (Mus musculus (Mouse)).